The chain runs to 188 residues: Elongation factor P (188 aa).

The protein belongs to the elongation factor P family.

Its subcellular location is the cytoplasm. It participates in protein biosynthesis; polypeptide chain elongation. In terms of biological role, involved in peptide bond synthesis. Stimulates efficient translation and peptide-bond synthesis on native or reconstituted 70S ribosomes in vitro. Probably functions indirectly by altering the affinity of the ribosome for aminoacyl-tRNA, thus increasing their reactivity as acceptors for peptidyl transferase. This Ureaplasma urealyticum serovar 10 (strain ATCC 33699 / Western) protein is Elongation factor P.